A 197-amino-acid chain; its full sequence is Nucleoid occlusion factor SlmA (197 aa).

The HTH tetR-type domain maps to 6–66 (NDRRTQILQA…GLIEFIEESL (61 aa)). The segment at residues 29-48 (TTAALAKQVGVSEAALYRHF) is a DNA-binding region (H-T-H motif).

Belongs to the nucleoid occlusion factor SlmA family. Homodimer. Interacts with FtsZ.

The protein localises to the cytoplasm. The protein resides in the nucleoid. Required for nucleoid occlusion (NO) phenomenon, which prevents Z-ring formation and cell division over the nucleoid. Acts as a DNA-associated cell division inhibitor that binds simultaneously chromosomal DNA and FtsZ, and disrupts the assembly of FtsZ polymers. SlmA-DNA-binding sequences (SBS) are dispersed on non-Ter regions of the chromosome, preventing FtsZ polymerization at these regions. The polypeptide is Nucleoid occlusion factor SlmA (Marinomonas sp. (strain MWYL1)).